A 344-amino-acid chain; its full sequence is RNA 3'-terminal phosphate cyclase (344 aa).

ATP is bound by residues Gln-103 and 283 to 287 (HLADQ). Residue His-308 is the Tele-AMP-histidine intermediate of the active site.

Belongs to the RNA 3'-terminal cyclase family. Type 1 subfamily.

It localises to the cytoplasm. The enzyme catalyses a 3'-end 3'-phospho-ribonucleotide-RNA + ATP = a 3'-end 2',3'-cyclophospho-ribonucleotide-RNA + AMP + diphosphate. In terms of biological role, catalyzes the conversion of 3'-phosphate to a 2',3'-cyclic phosphodiester at the end of RNA. The mechanism of action of the enzyme occurs in 3 steps: (A) adenylation of the enzyme by ATP; (B) transfer of adenylate to an RNA-N3'P to produce RNA-N3'PP5'A; (C) and attack of the adjacent 2'-hydroxyl on the 3'-phosphorus in the diester linkage to produce the cyclic end product. The biological role of this enzyme is unknown but it is likely to function in some aspects of cellular RNA processing. The chain is RNA 3'-terminal phosphate cyclase from Salmonella agona (strain SL483).